The sequence spans 1487 residues: Adhesion G protein-coupled receptor L2 (1487 aa).

Positions 1 to 25 (MVSSGCRMRSLWFIIIISFSPSTEG) are cleaved as a signal peptide. Residues 26 to 855 (FSRAALPFGL…VHHLLLTVIT (830 aa)) are Extracellular-facing. One can recognise an SUEL-type lectin domain in the interval 41–130 (SCEGYSIDLR…KYLEVQYECV (90 aa)). N-linked (GlcNAc...) asparagine glycosylation is present at asparagine 99. The region spanning 139–398 (VCPGTLKAIV…ILRYSLEFGP (260 aa)) is the Olfactomedin-like domain. Residues 423-439 (STTSSASQRGPVSSTAA) are compositionally biased toward polar residues. The segment at 423 to 461 (STTSSASQRGPVSSTAAGPQDGSRGTKPPPAVSTTKIPP) is disordered. N-linked (GlcNAc...) asparagine glycans are attached at residues asparagine 524 and asparagine 735. Positions 663–841 (TRVSMPTENI…AILMAHREIA (179 aa)) constitute a GAIN-B domain. 2 cysteine pairs are disulfide-bonded: cysteine 792–cysteine 823 and cysteine 811–cysteine 825. The GPS stretch occupies residues 792 to 841 (CSFWNYSERTMMGYWSTQGCKLVDTNKTRTTCACSHLTNFAILMAHREIA). The interval 829–841 (TNFAILMAHREIA) is stachel. A helical transmembrane segment spans residues 856–876 (WVGIVVSLVCLAICIFTFCFF). Residues 877-884 (RGLQSDRN) are Cytoplasmic-facing. A helical transmembrane segment spans residues 885–905 (TIHKNLCINLFIAEFIFLIGI). The Extracellular segment spans residues 906 to 911 (DKTKYT). Residues 912–932 (IACPVFAGLLHFFFLAAFSWM) form a helical membrane-spanning segment. At 933 to 955 (CLEGVQLYLMLVEVFESEYSRKK) the chain is on the cytoplasmic side. Residues 956 to 976 (YYYVAGYLFPATVVGVSAAID) form a helical membrane-spanning segment. Residues 977–994 (YKSYGTVQACWLHVDNYF) lie on the Extracellular side of the membrane. The helical transmembrane segment at 995–1015 (IWSFIGPVTFIILLNIIFLVI) threads the bilayer. At 1016 to 1064 (TLCKMVKHSNTLKPDSSRLENINNYRVCDGYYNTDLPGYEDNKPFIKSW) the chain is on the cytoplasmic side. A helical membrane pass occupies residues 1065–1085 (VLGAFALLCLLGLTWSFGLLF). Residues 1086–1090 (VNEET) lie on the Extracellular side of the membrane. Residues 1091–1111 (VVMAYLFTAFNAFQGLFIFIF) traverse the membrane as a helical segment. Positions 1386–1430 (EADDHLQSPNRDSLYTSMPNLRDSPYPESSPDMAEDLSPSRRSEN) are disordered. Over residues 1392–1404 (QSPNRDSLYTSMP) the composition is skewed to polar residues. A phosphoserine mark is found at serine 1402, serine 1437, and serine 1458.

This sequence belongs to the G-protein coupled receptor 2 family. Adhesion G-protein coupled receptor (ADGR) subfamily. Heterodimer of 2 chains generated by proteolytic processing; the large extracellular N-terminal fragment and the membrane-bound C-terminal fragment predominantly remain associated and non-covalently linked. Post-translationally, autoproteolytically processed at the GPS region of the GAIN-B domain; this cleavage modulates receptor activity. In terms of tissue distribution, ubiquitously expressed. In neurons, specifically localizes to dendritic domains of CA1 pyramidal neurons in the S. lacunosummoleculare.

Its subcellular location is the postsynaptic cell membrane. With respect to regulation, forms a heterodimer of 2 chains generated by proteolytic processing that remain associated through non-covalent interactions mediated by the GAIN-B domain. In the inactivated receptor, the Stachel sequence (also named stalk) is embedded in the GAIN-B domain, where it adopts a beta-strand conformation. On activation, the Stachel moves into the 7 transmembrane region and adopts a twisted hook-shaped configuration that forms contacts within the receptor, leading to coupling of a G-alpha protein, which activates signaling. The cleaved GAIN-B and N-terminal domains can then dissociate from the rest of the receptor. Its function is as follows. Orphan adhesion G-protein coupled receptor (aGPCR), which mediates synapse specificity. Ligand binding causes a conformation change that triggers signaling via guanine nucleotide-binding proteins (G proteins) and modulates the activity of downstream effectors. Following G-protein coupled receptor activation, associates with cell adhesion molecules that are expressed at the surface of adjacent cells to direct synapse specificity. Specifically mediates the establishment of perforant-path synapses on CA1-region pyramidal neurons in the hippocampus. Localizes to postsynaptic spines in excitatory synapses in the S.lacunosum-moleculare and interacts with presynaptic cell adhesion molecules, such as teneurins, promoting synapse formation. The sequence is that of Adhesion G protein-coupled receptor L2 from Mus musculus (Mouse).